We begin with the raw amino-acid sequence, 209 residues long: Uracil phosphoribosyltransferase (209 aa).

5-phospho-alpha-D-ribose 1-diphosphate contacts are provided by residues R79, R104, and 131 to 139; that span reads DPMLATGAS. Uracil is bound by residues I194 and 199–201; that span reads GDA. D200 contacts 5-phospho-alpha-D-ribose 1-diphosphate.

Belongs to the UPRTase family. Requires Mg(2+) as cofactor.

It catalyses the reaction UMP + diphosphate = 5-phospho-alpha-D-ribose 1-diphosphate + uracil. The protein operates within pyrimidine metabolism; UMP biosynthesis via salvage pathway; UMP from uracil: step 1/1. Allosterically activated by GTP. Its function is as follows. Catalyzes the conversion of uracil and 5-phospho-alpha-D-ribose 1-diphosphate (PRPP) to UMP and diphosphate. This chain is Uracil phosphoribosyltransferase, found in Staphylococcus haemolyticus (strain JCSC1435).